A 234-amino-acid polypeptide reads, in one-letter code: 2,3,4,5-tetrahydropyridine-2,6-dicarboxylate N-acetyltransferase (234 aa).

The protein belongs to the transferase hexapeptide repeat family. DapH subfamily.

It carries out the reaction (S)-2,3,4,5-tetrahydrodipicolinate + acetyl-CoA + H2O = L-2-acetamido-6-oxoheptanedioate + CoA. Its pathway is amino-acid biosynthesis; L-lysine biosynthesis via DAP pathway; LL-2,6-diaminopimelate from (S)-tetrahydrodipicolinate (acetylase route): step 1/3. Catalyzes the transfer of an acetyl group from acetyl-CoA to tetrahydrodipicolinate. This Lacticaseibacillus paracasei (strain ATCC 334 / BCRC 17002 / CCUG 31169 / CIP 107868 / KCTC 3260 / NRRL B-441) (Lactobacillus paracasei) protein is 2,3,4,5-tetrahydropyridine-2,6-dicarboxylate N-acetyltransferase.